The chain runs to 486 residues: Vacuolar protein sorting-associated protein 73 (486 aa).

The Cytoplasmic portion of the chain corresponds to 1-26 (MNRILSSASLLSNVSMPRQNKHKITK). Residues 27–47 (ALCYAIIVASIGSIQFGYHLS) form a helical membrane-spanning segment. Topologically, residues 48-90 (ELNAPQQVLSCSEFDIPMEGYPYDRTWLGKRGYKQCIPLNDEQ) are mitochondrial intermembrane. The helical transmembrane segment at 91–111 (IGIVTSVFCIGGILGSYFATS) threads the bilayer. The Cytoplasmic portion of the chain corresponds to 112 to 119 (LANIYGRK). A helical transmembrane segment spans residues 120–140 (FSSLINCTLNIVGSLIIFNSN). Residues 141–146 (SYRGLI) are Mitochondrial intermembrane-facing. A helical membrane pass occupies residues 147 to 167 (IGRILVGISCGSLIVIIPLFI). Residues 168–178 (KEVAPSGWEGL) lie on the Cytoplasmic side of the membrane. A helical transmembrane segment spans residues 179 to 199 (LGSMTQICIRLGVLLTQGIAL). Topologically, residues 200–208 (PLTDSYRWR) are mitochondrial intermembrane. Residues 209 to 229 (WILFGSFLIAVLNFFMWFIVD) form a helical membrane-spanning segment. At 230–305 (ESPKWLLAHG…RDRTNVKSRH (76 aa)) the chain is on the cytoplasmic side. Residues 306–326 (VITVLLFGQQFCGINSIVLYG) traverse the membrane as a helical segment. The Mitochondrial intermembrane portion of the chain corresponds to 327 to 342 (TKIISQLYPQHAIRIN). The chain crosses the membrane as a helical span at residues 343–363 (FFISMVNVLVTILVSLLIHSL). Residues 364–366 (PRK) lie on the Cytoplasmic side of the membrane. A helical transmembrane segment spans residues 367–387 (PLLMTSTVLVSVTAFIMGIAM). The Mitochondrial intermembrane segment spans residues 388 to 396 (NHNKMNLLI). Residues 397-417 (VFSFIYMGVFTMGLNPLPFII) traverse the membrane as a helical segment. Residues 418–432 (MREVSKPQDMVLAQR) are Cytoplasmic-facing. A helical membrane pass occupies residues 433–453 (YGTICNWVGTFIIAYTFPIIH). Position 454 (D454) is a topological domain, mitochondrial intermembrane. Residues 455-475 (VLSGYVFIIFAIIACSISAFI) form a helical membrane-spanning segment. The Cytoplasmic portion of the chain corresponds to 476–486 (WKKVPETKRSG).

The protein belongs to the major facilitator superfamily. Sugar transporter (TC 2.A.1.1) family.

It localises to the mitochondrion membrane. Functionally, may be involved in vacuolar protein sorting. This chain is Vacuolar protein sorting-associated protein 73 (VPS73), found in Saccharomyces cerevisiae (strain ATCC 204508 / S288c) (Baker's yeast).